The chain runs to 217 residues: Translation initiation factor IF-3 (217 aa).

The segment at Tyr185 to Ala217 is disordered. Over residues Glu191–Ala217 the composition is skewed to basic and acidic residues.

It belongs to the IF-3 family. In terms of assembly, monomer.

It localises to the cytoplasm. Functionally, IF-3 binds to the 30S ribosomal subunit and shifts the equilibrium between 70S ribosomes and their 50S and 30S subunits in favor of the free subunits, thus enhancing the availability of 30S subunits on which protein synthesis initiation begins. The polypeptide is Translation initiation factor IF-3 (Methylacidiphilum infernorum (isolate V4) (Methylokorus infernorum (strain V4))).